Here is a 112-residue protein sequence, read N- to C-terminus: Urocortin-2 (112 aa).

The signal sequence occupies residues Met-1–Val-22. Positions Thr-23–Ser-70 are excised as a propeptide. Residues Thr-27–Arg-66 are disordered. Over residues Thr-38–Ala-58 the composition is skewed to low complexity.

The protein belongs to the sauvagine/corticotropin-releasing factor/urotensin I family. Binds with high affinity to CRF receptors 2-alpha and 2-beta. In terms of processing, glycosylated.

Its subcellular location is the secreted. Functionally, suppresses food intake, delays gastric emptying and decreases heat-induced edema. Might represent an endogenous ligand for maintaining homeostasis after stress. The protein is Urocortin-2 (UCN2) of Homo sapiens (Human).